Reading from the N-terminus, the 703-residue chain is Protein FAR1-RELATED SEQUENCE 6 (703 aa).

The segment at 1–29 (MERSESVDEDVQASAYLENDEVRERDDPM) is disordered. Positions 99–184 (NYYNCYASEV…TLDHNHLLGC (86 aa)) constitute an FAR1 domain. The 96-residue stretch at 297–392 (VIFIDSSYIS…SLTHIMRKIP (96 aa)) folds into the MULE domain. An SWIM-type zinc finger spans residues 584-620 (FEVLYNRSVGEVRCICSCFNFYGYLCRHALCVLNFNG).

This sequence belongs to the FHY3/FAR1 family. As to expression, expressed in hypocotyls, rosette and cauline leaves, inflorescences stems, flowers and siliques.

The protein resides in the nucleus. In terms of biological role, putative transcription activator involved in regulating light control of development. May have a role in controlling flowering time. The chain is Protein FAR1-RELATED SEQUENCE 6 (FRS6) from Arabidopsis thaliana (Mouse-ear cress).